Consider the following 411-residue polypeptide: S-adenosylmethionine synthase (411 aa).

Histidine 15 provides a ligand contact to ATP. Position 17 (aspartate 17) interacts with Mg(2+). Glutamate 43 serves as a coordination point for K(+). L-methionine is bound by residues glutamate 56 and glutamine 99. The interval 99 to 109 (QSPDIAQGVDT) is flexible loop. ATP-binding positions include 174–176 (DGK), 247–248 (RF), aspartate 256, 262–263 (RK), alanine 279, and lysine 283. Aspartate 256 contributes to the L-methionine binding site. Lysine 287 is an L-methionine binding site.

Belongs to the AdoMet synthase family. As to quaternary structure, homotetramer; dimer of dimers. The cofactor is Mg(2+). It depends on K(+) as a cofactor.

Its subcellular location is the cytoplasm. It catalyses the reaction L-methionine + ATP + H2O = S-adenosyl-L-methionine + phosphate + diphosphate. The protein operates within amino-acid biosynthesis; S-adenosyl-L-methionine biosynthesis; S-adenosyl-L-methionine from L-methionine: step 1/1. In terms of biological role, catalyzes the formation of S-adenosylmethionine (AdoMet) from methionine and ATP. The overall synthetic reaction is composed of two sequential steps, AdoMet formation and the subsequent tripolyphosphate hydrolysis which occurs prior to release of AdoMet from the enzyme. This chain is S-adenosylmethionine synthase, found in Streptomyces spectabilis.